A 93-amino-acid chain; its full sequence is Large ribosomal subunit protein uL23cz/uL23cy (93 aa).

It belongs to the universal ribosomal protein uL23 family. As to quaternary structure, part of the 50S ribosomal subunit.

The protein resides in the plastid. Its subcellular location is the chloroplast. Its function is as follows. Binds to 23S rRNA. This chain is Large ribosomal subunit protein uL23cz/uL23cy (rpl23-A), found in Platanus occidentalis (Sycamore).